Here is a 469-residue protein sequence, read N- to C-terminus: MTNIITRFAPSPTGFLHIGSARTALFNYLFARHNNGKFFLRIEDTDKKRSTKEAIAAIFSGLKWLGINWDGEVIFQSKRNSLYKEAALKLLKEGKAYYCFTKQEEIARQRQQALKDKKHFIFNSEWRDKGPSTYPADIKPVIRLKVPREGSITIHDTLQGDIVIENSHIDDMILIRADGTATYMLAVIVDDHDMGITHIIRGDDHLTNAARQIAIYHAFGYEVPNMTHIPLIHGADGTKLSKRHGALGVEAYKDMGYLPESLCNYLLRLGWSHGDDEIISMNQAIEWFNLDSLGKSPSKLDFAKMNSINSHYLRMLDNDSLTSKTVAILKQNYKISEKEVSYIKQAMPSLIVRSATLIDLAQLAYIYLVDSPMIYNQDAKEVIKNCDKDLIKQIIANLNKLEQFDKECIQNKFKEIAIYNGLKLNDIMRPVRALITGMTASPSIFEIAETLGKENILKRLNIIYYNLNF.

The short motif at 10-20 (PSPTGFLHIGS) is the 'HIGH' region element. The 'KMSKS' region signature appears at 239 to 243 (KLSKR). An ATP-binding site is contributed by Lys-242.

The protein belongs to the class-I aminoacyl-tRNA synthetase family. Glutamate--tRNA ligase type 1 subfamily. In terms of assembly, monomer.

The protein localises to the cytoplasm. The catalysed reaction is tRNA(Glu) + L-glutamate + ATP = L-glutamyl-tRNA(Glu) + AMP + diphosphate. Functionally, catalyzes the attachment of glutamate to tRNA(Glu) in a two-step reaction: glutamate is first activated by ATP to form Glu-AMP and then transferred to the acceptor end of tRNA(Glu). The protein is Glutamate--tRNA ligase 2 of Rickettsia typhi (strain ATCC VR-144 / Wilmington).